The following is a 65-amino-acid chain: Large ribosomal subunit protein bL35 (65 aa).

It belongs to the bacterial ribosomal protein bL35 family.

The sequence is that of Large ribosomal subunit protein bL35 from Synechococcus sp. (strain CC9311).